A 135-amino-acid polypeptide reads, in one-letter code: Phosphoribosyl-AMP cyclohydrolase (135 aa).

D89 contributes to the Mg(2+) binding site. C90 contacts Zn(2+). 2 residues coordinate Mg(2+): D91 and D93. The Zn(2+) site is built by C106 and C113.

It belongs to the PRA-CH family. As to quaternary structure, homodimer. The cofactor is Mg(2+). Zn(2+) is required as a cofactor.

The protein resides in the cytoplasm. It catalyses the reaction 1-(5-phospho-beta-D-ribosyl)-5'-AMP + H2O = 1-(5-phospho-beta-D-ribosyl)-5-[(5-phospho-beta-D-ribosylamino)methylideneamino]imidazole-4-carboxamide. It participates in amino-acid biosynthesis; L-histidine biosynthesis; L-histidine from 5-phospho-alpha-D-ribose 1-diphosphate: step 3/9. Its function is as follows. Catalyzes the hydrolysis of the adenine ring of phosphoribosyl-AMP. This Bifidobacterium adolescentis (strain ATCC 15703 / DSM 20083 / NCTC 11814 / E194a) protein is Phosphoribosyl-AMP cyclohydrolase.